The primary structure comprises 79 residues: Small ribosomal subunit protein bS18 (79 aa).

It belongs to the bacterial ribosomal protein bS18 family. As to quaternary structure, part of the 30S ribosomal subunit. Forms a tight heterodimer with protein bS6.

Its function is as follows. Binds as a heterodimer with protein bS6 to the central domain of the 16S rRNA, where it helps stabilize the platform of the 30S subunit. This is Small ribosomal subunit protein bS18 from Nitrobacter hamburgensis (strain DSM 10229 / NCIMB 13809 / X14).